A 495-amino-acid polypeptide reads, in one-letter code: UDP-N-acetylmuramoyl-L-alanyl-D-glutamate--2,6-diaminopimelate ligase (495 aa).

UDP-N-acetyl-alpha-D-muramoyl-L-alanyl-D-glutamate contacts are provided by residues Leu-27, Ser-29, and 44–46 (HQA). An ATP-binding site is contributed by 116-122 (GTNGKTT). Residues Asn-157, 158–159 (TT), Ser-185, Gln-191, and Arg-193 each bind UDP-N-acetyl-alpha-D-muramoyl-L-alanyl-D-glutamate. Residue Lys-225 is modified to N6-carboxylysine. Meso-2,6-diaminopimelate is bound by residues Arg-390, 414-417 (DNPR), Gly-465, and Glu-469. A Meso-diaminopimelate recognition motif motif is present at residues 414–417 (DNPR).

This sequence belongs to the MurCDEF family. MurE subfamily. Mg(2+) is required as a cofactor. In terms of processing, carboxylation is probably crucial for Mg(2+) binding and, consequently, for the gamma-phosphate positioning of ATP.

Its subcellular location is the cytoplasm. The enzyme catalyses UDP-N-acetyl-alpha-D-muramoyl-L-alanyl-D-glutamate + meso-2,6-diaminopimelate + ATP = UDP-N-acetyl-alpha-D-muramoyl-L-alanyl-gamma-D-glutamyl-meso-2,6-diaminopimelate + ADP + phosphate + H(+). The protein operates within cell wall biogenesis; peptidoglycan biosynthesis. Its function is as follows. Catalyzes the addition of meso-diaminopimelic acid to the nucleotide precursor UDP-N-acetylmuramoyl-L-alanyl-D-glutamate (UMAG) in the biosynthesis of bacterial cell-wall peptidoglycan. This is UDP-N-acetylmuramoyl-L-alanyl-D-glutamate--2,6-diaminopimelate ligase from Salmonella paratyphi A (strain ATCC 9150 / SARB42).